The sequence spans 78 residues: LYR motif-containing protein 9 (78 aa).

It belongs to the complex I LYR family. LYRM9 subfamily.

The chain is LYR motif-containing protein 9 (Lyrm9) from Mus musculus (Mouse).